The primary structure comprises 352 residues: N-acetyl-gamma-glutamyl-phosphate reductase (352 aa).

Cys155 is a catalytic residue.

The protein belongs to the NAGSA dehydrogenase family. Type 1 subfamily.

It localises to the cytoplasm. It carries out the reaction N-acetyl-L-glutamate 5-semialdehyde + phosphate + NADP(+) = N-acetyl-L-glutamyl 5-phosphate + NADPH + H(+). It functions in the pathway amino-acid biosynthesis; L-arginine biosynthesis; N(2)-acetyl-L-ornithine from L-glutamate: step 3/4. Its function is as follows. Catalyzes the NADPH-dependent reduction of N-acetyl-5-glutamyl phosphate to yield N-acetyl-L-glutamate 5-semialdehyde. The protein is N-acetyl-gamma-glutamyl-phosphate reductase of Brachyspira hyodysenteriae (strain ATCC 49526 / WA1).